A 454-amino-acid polypeptide reads, in one-letter code: COBRA-like protein 6 (454 aa).

Positions 1–24 are cleaved as a signal peptide; the sequence is MGAMLNLLLVVTVILCSILSPTRF. 5 N-linked (GlcNAc...) asparagine glycosylation sites follow: Asn-104, Asn-191, Asn-320, Asn-355, and Asn-391. The GPI-anchor amidated serine moiety is linked to residue Ser-429. Positions 430-454 are cleaved as a propeptide — removed in mature form; the sequence is SSSSAVISSVSVVFCFLLHHLLLLV.

The protein belongs to the COBRA family. Expressed in flowers and siliques.

Its subcellular location is the cell membrane. The polypeptide is COBRA-like protein 6 (COBL6) (Arabidopsis thaliana (Mouse-ear cress)).